The chain runs to 447 residues: Omega-3 fatty acid desaturase, chloroplastic (447 aa).

The short motif at His-167–His-171 is the Histidine box-1 element. A Histidine box-2 motif is present at residues His-203 to His-207. The Histidine box-3 motif lies at His-370 to His-374.

It belongs to the fatty acid desaturase type 1 family.

It localises to the plastid. The protein localises to the chloroplast membrane. It functions in the pathway lipid metabolism; polyunsaturated fatty acid biosynthesis. Its function is as follows. Chloroplast omega-3 fatty acid desaturase introduces the third double bond in the biosynthesis of 16:3 and 18:3 fatty acids, important constituents of plant membranes. It is thought to use ferredoxin as an electron donor and to act on fatty acids esterified to galactolipids, sulfolipids and phosphatidylglycerol. This is Omega-3 fatty acid desaturase, chloroplastic (FAD7) from Sesamum indicum (Oriental sesame).